A 478-amino-acid chain; its full sequence is Crt homolog 3 (478 aa).

A disordered region spans residues 1–30; that stretch reads MGSDERKPLLSINDGDDDFNHQDVSTKTPP. Over 1-52 the chain is Cytoplasmic; the sequence is MGSDERKPLLSINDGDDDFNHQDVSTKTPPIKKESLSNKFKSFLKKSMTKET. Residues 53-73 traverse the membrane as a helical segment; sequence LPILIYVLLYIISGVINVVLL. The Vacuolar segment spans residues 74–83; the sequence is KKLMIKFVNY. Residues 84–104 traverse the membrane as a helical segment; it reads GFFLSQITNYGYLPIFLVAMW. Topologically, residues 105 to 124 are cytoplasmic; the sequence is YKMYCTSDVPKETRNFPQYK. The helical transmembrane segment at 125–145 threads the bilayer; sequence FVIMGLLDAINGFFVVIGGVS. Residues 146 to 149 lie on the Vacuolar side of the membrane; it reads TSGP. The helical transmembrane segment at 150–170 threads the bilayer; sequence LQQLLNQAIIPFTMIASFIFL. The Cytoplasmic portion of the chain corresponds to 171–178; it reads RERYSLFQ. The chain crosses the membrane as a helical span at residues 179 to 199; sequence LGGAAVILGGVIVSLIPSLVG. The Vacuolar portion of the chain corresponds to 200-205; sequence GSSGGN. The chain crosses the membrane as a helical span at residues 206-226; that stretch reads ILFYNFFYLISVIPGALSNVY. Topologically, residues 227-237 are cytoplasmic; sequence KDIAFQSIDMD. A helical transmembrane segment spans residues 238–258; the sequence is VWYLQFWDCLYQSLFGSILFP. Over 259–322 the chain is Vacuolar; it reads VNNWLPPPAT…FVCDDCHNTW (64 aa). Asparagine 296 carries an N-linked (GlcNAc...) asparagine glycan. The helical transmembrane segment at 323-343 threads the bilayer; it reads IIVLIYMTVNIAYNIFILLVL. The Cytoplasmic segment spans residues 344-352; it reads KHAGATVYS. Residues 353 to 373 form a helical membrane-spanning segment; sequence IANTVILPLTNIFFSIHFIMG. Over 374–376 the chain is Vacuolar; that stretch reads AAT. The helical transmembrane segment at 377-397 threads the bilayer; sequence TPFSALSVAGLLLILFGLGGY. Topologically, residues 398 to 478 are cytoplasmic; that stretch reads RIGSMIKKPP…RYRATNIINN (81 aa). The interval 404–446 is disordered; sequence KKPPPDSKKDSEQQGGEGGAGDGDSSDNKNNLGDSAEIPQQIQ. Residues 406-415 show a composition bias toward basic and acidic residues; it reads PPPDSKKDSE.

Belongs to the CRT-like transporter family.

The protein localises to the vacuole membrane. In terms of biological role, nutrient transporter. Involved in maintaining the osmotic homeostasis of the digestive vacuole. The polypeptide is Crt homolog 3 (crtp3) (Dictyostelium discoideum (Social amoeba)).